A 240-amino-acid chain; its full sequence is uncharacterized protein (240 aa).

It localises to the mitochondrion. This is an uncharacterized protein from Arabidopsis thaliana (Mouse-ear cress).